Here is a 223-residue protein sequence, read N- to C-terminus: MEVKDILKTVDHTLLATTATWPEIQTILDDAMAYETASACIPASYVKKAAEYVSGKLAICTVIGFPNGYSTTAAKVFECQDAIQNGADEIDMVINLTDVKNGDFDTVEEEIRQIKAKCQDHILKVIVETCQLTKEELIELCGVVTRSGADFIKTSTGFSTAGATFEDVEVMAKYVGEGVKIKAAGGISSLEDAKTFIALGASRLGTSRIIKIVKNEATKPDSY.

Aspartate 91 serves as the catalytic Proton donor/acceptor. The active-site Schiff-base intermediate with acetaldehyde is the lysine 153. Lysine 182 acts as the Proton donor/acceptor in catalysis.

It belongs to the DeoC/FbaB aldolase family. DeoC type 1 subfamily.

It is found in the cytoplasm. It catalyses the reaction 2-deoxy-D-ribose 5-phosphate = D-glyceraldehyde 3-phosphate + acetaldehyde. Its pathway is carbohydrate degradation; 2-deoxy-D-ribose 1-phosphate degradation; D-glyceraldehyde 3-phosphate and acetaldehyde from 2-deoxy-alpha-D-ribose 1-phosphate: step 2/2. Its function is as follows. Catalyzes a reversible aldol reaction between acetaldehyde and D-glyceraldehyde 3-phosphate to generate 2-deoxy-D-ribose 5-phosphate. The protein is Deoxyribose-phosphate aldolase of Streptococcus pyogenes serotype M3 (strain ATCC BAA-595 / MGAS315).